A 152-amino-acid chain; its full sequence is Large ribosomal subunit protein bL9 (152 aa).

The protein belongs to the bacterial ribosomal protein bL9 family.

Binds to the 23S rRNA. This Mycoplasmopsis synoviae (strain 53) (Mycoplasma synoviae) protein is Large ribosomal subunit protein bL9.